The chain runs to 154 residues: Protein phosphatase 1 regulatory subunit 27 (154 aa).

ANK repeat units follow at residues 63–92 and 96–125; these read SGLAALHEAVLSGNLECVKLLVKYGADIHQ and AGWTPLHIACSDGYPDIARYLISLGADRDA.

Interacts with DYSF and PPP1CA.

Inhibits phosphatase activity of protein phosphatase 1 (PP1) complexes. The sequence is that of Protein phosphatase 1 regulatory subunit 27 (PPP1R27) from Homo sapiens (Human).